The primary structure comprises 249 residues: Isoprenyl transferase (249 aa).

The active site involves D29. D29 is a Mg(2+) binding site. Substrate-binding positions include 30 to 33, W34, R42, H46, and 74 to 76; these read GNGR and STE. The active-site Proton acceptor is the N77. Residues W78, R80, R197, and 203–205 contribute to the substrate site; that span reads RLS. Position 216 (E216) interacts with Mg(2+).

It belongs to the UPP synthase family. Homodimer. Mg(2+) serves as cofactor.

In terms of biological role, catalyzes the condensation of isopentenyl diphosphate (IPP) with allylic pyrophosphates generating different type of terpenoids. The protein is Isoprenyl transferase of Gloeobacter violaceus (strain ATCC 29082 / PCC 7421).